The chain runs to 246 residues: Small ribosomal subunit protein uS2 (246 aa).

Belongs to the universal ribosomal protein uS2 family.

The sequence is that of Small ribosomal subunit protein uS2 from Saccharophagus degradans (strain 2-40 / ATCC 43961 / DSM 17024).